A 473-amino-acid chain; its full sequence is Photosystem II CP43 reaction center protein (473 aa).

Residues 1–14 (MKTLYSLRRFYHVE) constitute a propeptide that is removed on maturation. Residue threonine 15 is modified to N-acetylthreonine. A Phosphothreonine modification is found at threonine 15. 5 helical membrane-spanning segments follow: residues 69-93 (LFEVAHFVPEKPMYEQGLILLPHLA), 134-155 (LIGPETLEESFPFFGYVWKDKN), 178-200 (KAVWFGGVYDTWAPGGGDVRKIT), 255-275 (KPFAWARRAFIWSGEAYLSYS), and 291-312 (WFNNTAYPSEFYGPTGPEASQA). Glutamate 367 lines the [CaMn4O5] cluster pocket. A helical membrane pass occupies residues 447 to 471 (RARAAAAGFEKGIDRETEPVFFMNP).

It belongs to the PsbB/PsbC family. PsbC subfamily. PSII is composed of 1 copy each of membrane proteins PsbA, PsbB, PsbC, PsbD, PsbE, PsbF, PsbH, PsbI, PsbJ, PsbK, PsbL, PsbM, PsbT, PsbX, PsbY, PsbZ, Psb30/Ycf12, at least 3 peripheral proteins of the oxygen-evolving complex and a large number of cofactors. It forms dimeric complexes. Binds multiple chlorophylls and provides some of the ligands for the Ca-4Mn-5O cluster of the oxygen-evolving complex. It may also provide a ligand for a Cl- that is required for oxygen evolution. PSII binds additional chlorophylls, carotenoids and specific lipids. serves as cofactor.

It localises to the plastid. It is found in the chloroplast thylakoid membrane. Its function is as follows. One of the components of the core complex of photosystem II (PSII). It binds chlorophyll and helps catalyze the primary light-induced photochemical processes of PSII. PSII is a light-driven water:plastoquinone oxidoreductase, using light energy to abstract electrons from H(2)O, generating O(2) and a proton gradient subsequently used for ATP formation. The chain is Photosystem II CP43 reaction center protein from Staurastrum punctulatum (Green alga).